The primary structure comprises 914 residues: PHD finger protein 14 (914 aa).

Residues Asp19 to Thr276 are disordered. Over residues Glu53 to Ser68 the composition is skewed to low complexity. Over residues Glu90–Ser102 the composition is skewed to basic and acidic residues. Acidic residues-rich tracts occupy residues Glu155–Asn168 and Gly191–Glu233. A PHD-type 1 zinc finger spans residues Ile285–Gly346. Zn(2+) contacts are provided by Cys288, Cys291, Cys305, Cys308, His313, Cys316, Cys340, Cys343, Cys351, Cys354, His371, Cys374, Cys407, Cys410, Cys424, Cys429, His434, Cys437, Cys461, and His464. The C2HC pre-PHD-type zinc-finger motif lies at Ser348–Val381. A PHD-type 2 zinc finger spans residues Lys405 to Ala465. A coiled-coil region spans residues Met596–Glu644. Residues Leu692–Ala746 form a PHD-type 3 zinc finger. Zn(2+) is bound by residues Cys695, Cys698, Cys710, Cys713, His718, Cys721, Cys740, and Cys743. The segment at Pro777 to Cys838 is disordered. The segment covering Thr792–Met802 has biased composition (basic residues). The segment covering Ser803–Glu817 has biased composition (basic and acidic residues). The PHD-type 4 zinc-finger motif lies at Arg835–Ser888. Zn(2+)-binding residues include Cys838, Cys841, Cys853, Cys856, His861, Cys864, Cys882, and Cys885. The disordered stretch occupies residues Thr887–Asp914. Acidic residues predominate over residues Glu894–Asp914.

As to quaternary structure, interacts with histone H3.

Its subcellular location is the nucleus. Its function is as follows. Histone-binding protein. Binds preferentially to unmodified histone H3 but can also bind to a lesser extent to histone H3 trimethylated at 'Lys-9' (H3K9me3) as well as to histone H3 monomethylated at 'Lys-27' (H3K27ac) and trimethylated at 'Lys-27' (H3K27me3). Represses PDGFRA expression, thus playing a role in regulation of mesenchymal cell proliferation. This is PHD finger protein 14 from Danio rerio (Zebrafish).